A 513-amino-acid polypeptide reads, in one-letter code: Glutamate--tRNA ligase 2 (513 aa).

The short motif at 11-21 (PSPTGFLHIGS) is the 'HIGH' region element. A 'KMSKS' region motif is present at residues 240–244 (KLSKR). K243 provides a ligand contact to ATP. One can recognise an RPE1 insert domain in the interval 335–383 (NTLLRHLPYREEFGGNTERSTAAYIDIREDASTGLTYKLPLAVELPKKF).

The protein belongs to the class-I aminoacyl-tRNA synthetase family. Glutamate--tRNA ligase type 1 subfamily. As to quaternary structure, monomer.

The protein localises to the cytoplasm. It catalyses the reaction tRNA(Glu) + L-glutamate + ATP = L-glutamyl-tRNA(Glu) + AMP + diphosphate. In terms of biological role, catalyzes the attachment of glutamate to tRNA(Glu) in a two-step reaction: glutamate is first activated by ATP to form Glu-AMP and then transferred to the acceptor end of tRNA(Glu). This Rickettsia conorii (strain ATCC VR-613 / Malish 7) protein is Glutamate--tRNA ligase 2.